Here is a 451-residue protein sequence, read N- to C-terminus: tRNA-2-methylthio-N(6)-dimethylallyladenosine synthase (451 aa).

The MTTase N-terminal domain maps to 2-119 (QNLYIKTYGC…LPDLLDACLA (118 aa)). Residues C11, C48, C82, C157, C161, and C164 each coordinate [4Fe-4S] cluster. The Radical SAM core domain occupies 143–377 (GRDGATAFVT…RINGLAQGYA (235 aa)). The region spanning 378-441 (QALVGTQQAV…PNSLRGRAAL (64 aa)) is the TRAM domain.

This sequence belongs to the methylthiotransferase family. MiaB subfamily. Monomer. The cofactor is [4Fe-4S] cluster.

The protein localises to the cytoplasm. It carries out the reaction N(6)-dimethylallyladenosine(37) in tRNA + (sulfur carrier)-SH + AH2 + 2 S-adenosyl-L-methionine = 2-methylsulfanyl-N(6)-dimethylallyladenosine(37) in tRNA + (sulfur carrier)-H + 5'-deoxyadenosine + L-methionine + A + S-adenosyl-L-homocysteine + 2 H(+). In terms of biological role, catalyzes the methylthiolation of N6-(dimethylallyl)adenosine (i(6)A), leading to the formation of 2-methylthio-N6-(dimethylallyl)adenosine (ms(2)i(6)A) at position 37 in tRNAs that read codons beginning with uridine. The protein is tRNA-2-methylthio-N(6)-dimethylallyladenosine synthase of Acidithiobacillus ferrooxidans (strain ATCC 23270 / DSM 14882 / CIP 104768 / NCIMB 8455) (Ferrobacillus ferrooxidans (strain ATCC 23270)).